Reading from the N-terminus, the 461-residue chain is Methylthioribose transporter (461 aa).

12 helical membrane-spanning segments follow: residues 33–53 (LLGIGCVIGTGIFVITGTVAA), 56–76 (AGPALIISFILAGLACALAAF), 102–122 (LLAFLIGWDLMLEYVIALSAV), 152–172 (MAGAVFNLPAAVIILLITAIV), 185–205 (VIVLMKIAIILLFIIVGIGYV), 213–233 (FMPFGMKGVILSAATVFFAYL), 254–274 (VGIISALAVCTVLYIAVSLVL), 301–321 (VAGIISVGAIIGITTVMLALL), 355–375 (TWLTGIVAAGIAGFINLGTLA), 376–396 (HLVNMGTLAAFTVISIAVIVL), 409–429 (VPFVPVVPIISAGICLWFMYS), and 432–452 (GVTWLSFVIWIAVGTLVYFLY).

Belongs to the amino acid-polyamine-organocation (APC) superfamily.

The protein localises to the cell membrane. Its function is as follows. Involved in import of methylthioribose (MTR) into the cell. This is Methylthioribose transporter from Bacillus subtilis (strain 168).